The following is a 213-amino-acid chain: Cell division protein SepF 2 (213 aa).

Residues E16–S63 are disordered. Positions P27–P39 are enriched in acidic residues.

This sequence belongs to the SepF family. In terms of assembly, homodimer. Interacts with FtsZ.

It localises to the cytoplasm. Its function is as follows. Cell division protein that is part of the divisome complex and is recruited early to the Z-ring. Probably stimulates Z-ring formation, perhaps through the cross-linking of FtsZ protofilaments. Its function overlaps with FtsA. This Streptomyces avermitilis (strain ATCC 31267 / DSM 46492 / JCM 5070 / NBRC 14893 / NCIMB 12804 / NRRL 8165 / MA-4680) protein is Cell division protein SepF 2.